A 667-amino-acid polypeptide reads, in one-letter code: DNA ligase (667 aa).

NAD(+)-binding positions include 32–36, 81–82, and Glu-110; these read DSEYD and SL. The active-site N6-AMP-lysine intermediate is Lys-112. NAD(+)-binding residues include Arg-133, Glu-167, Lys-283, and Lys-307. The Zn(2+) site is built by Cys-401, Cys-404, Cys-419, and Cys-424. Residues 586–667 form the BRCT domain; that stretch reads EGHPEFSGKT…FVDKQNELNS (82 aa).

It belongs to the NAD-dependent DNA ligase family. LigA subfamily. Mg(2+) is required as a cofactor. Mn(2+) serves as cofactor.

The enzyme catalyses NAD(+) + (deoxyribonucleotide)n-3'-hydroxyl + 5'-phospho-(deoxyribonucleotide)m = (deoxyribonucleotide)n+m + AMP + beta-nicotinamide D-nucleotide.. Functionally, DNA ligase that catalyzes the formation of phosphodiester linkages between 5'-phosphoryl and 3'-hydroxyl groups in double-stranded DNA using NAD as a coenzyme and as the energy source for the reaction. It is essential for DNA replication and repair of damaged DNA. The polypeptide is DNA ligase (Staphylococcus aureus (strain COL)).